We begin with the raw amino-acid sequence, 233 residues long: Membrane glycoprotein UL9 (233 aa).

An N-terminal signal peptide occupies residues 1–20 (MSKRLQVFPWITILFYTSKS). N-linked (GlcNAc...) asparagine; by host glycosylation is found at asparagine 40, asparagine 94, asparagine 101, asparagine 131, and asparagine 169. Residues 194-214 (MWIIPLVIVITIIVLICFKFP) traverse the membrane as a helical segment.

It belongs to the HHV-5 UL9 family.

The protein resides in the host membrane. This is Membrane glycoprotein UL9 (UL9) from Homo sapiens (Human).